Reading from the N-terminus, the 459-residue chain is Aluminum-activated malate transporter 1 (459 aa).

Over 1-52 (MDIDHGRESDGEMVGTIASCGLLLHSLLAGLGRRAAGFARKVGGAAREDPRR) the chain is Extracellular. 2 consecutive transmembrane segments (helical) span residues 53–73 (VAHS…YFVT) and 74–94 (PLFN…VVVM). Residues 95-108 (EYTVGATLSKGLNR) lie on the Extracellular side of the membrane. The chain crosses the membrane as a helical span at residues 109 to 129 (ALATLVAGCIAVGAHQLAELA). Over 130–137 (ERCGDQGE) the chain is Cytoplasmic. The chain crosses the membrane as a helical span at residues 138–158 (PIVLTVLVFFVASAATFLRFI). The Extracellular portion of the chain corresponds to 159 to 160 (PE). Residues 161 to 181 (IKAKYDYGVTIFILTFGLVAV) traverse the membrane as a helical segment. Residues 182-199 (SSYRVEELIQLAHQRFYT) lie on the Cytoplasmic side of the membrane. A helical membrane pass occupies residues 200–220 (IAVGVFICLCTTVFLFPVWAG). At 221–459 (EDVHKLASGN…DEPLPDVVIL (239 aa)) the chain is on the extracellular side.

It belongs to the aromatic acid exporter (TC 2.A.85) family. As to expression, detected in root tips.

The protein resides in the cell membrane. Activated by external aluminum. The enhancement of malate transport is not due to alteration in the selectivity properties but is due to an increased anion permeability. Functionally, malate transporter critical for aluminum tolerance. Permeable to chloride, nitrate, sulfate and malate. The chain is Aluminum-activated malate transporter 1 (ALMT1) from Triticum aestivum (Wheat).